The sequence spans 307 residues: Thiamine-monophosphate kinase (307 aa).

Mg(2+) contacts are provided by D26, T37, T38, and D39. H46 lines the substrate pocket. Residues D68 and D117 each coordinate Mg(2+). ATP-binding positions include 116–117 and R140; that span reads GD. Residue D207 coordinates Mg(2+). Residue T209 participates in ATP binding. D210 is a binding site for Mg(2+). Substrate contacts are provided by E254 and F304.

Belongs to the thiamine-monophosphate kinase family.

It catalyses the reaction thiamine phosphate + ATP = thiamine diphosphate + ADP. It participates in cofactor biosynthesis; thiamine diphosphate biosynthesis; thiamine diphosphate from thiamine phosphate: step 1/1. In terms of biological role, catalyzes the ATP-dependent phosphorylation of thiamine-monophosphate (TMP) to form thiamine-pyrophosphate (TPP), the active form of vitamin B1. This is Thiamine-monophosphate kinase from Leptospira interrogans serogroup Icterohaemorrhagiae serovar Lai (strain 56601).